Here is a 378-residue protein sequence, read N- to C-terminus: Putative zinc finger protein C09F5.3 (378 aa).

Basic residues predominate over residues 1-14 (MRKTEKMKRPHNSS). Disordered stretches follow at residues 1–36 (MRKT…SKSI) and 61–80 (TLSE…NSAP). Composition is skewed to basic and acidic residues over residues 16-26 (VKQEERADDSH) and 62-71 (LSEHVPEKKP). The C2H2-type 1 zinc finger occupies 42-65 (LKCELCSTVCSSISQLQSHTLSEH). Residues 85–107 (VACQQCEDTFEDFAQFAIHMKSH) form a C2H2-type 2; degenerate zinc finger. The segment at 204–226 (YGCALCATSYPSQLHLITHVQMS) adopts a C2H2-type 3; degenerate zinc-finger fold. The disordered stretch occupies residues 231–250 (TFYPPSLPIPTPPSPKSTPK). A compositionally biased stretch (pro residues) spans 235 to 246 (PSLPIPTPPSPK). C2H2-type zinc fingers lie at residues 254 to 277 (LQCS…LRKH), 284 to 306 (DKCA…CLRH), 312 to 334 (HHCP…CAYH), and 355 to 377 (FVCP…TKIH).

It is found in the nucleus. In Caenorhabditis elegans, this protein is Putative zinc finger protein C09F5.3.